The sequence spans 128 residues: Fluoride-specific ion channel FluC (128 aa).

Helical transmembrane passes span 8–28 (IIFI…LGLL), 38–58 (LGTL…LAFF), 71–91 (FFVT…AEVI), and 103–123 (LMLA…GVFI). The Na(+) site is built by G78 and T81.

The protein belongs to the fluoride channel Fluc/FEX (TC 1.A.43) family.

Its subcellular location is the cell inner membrane. It catalyses the reaction fluoride(in) = fluoride(out). Na(+) is not transported, but it plays an essential structural role and its presence is essential for fluoride channel function. Its function is as follows. Fluoride-specific ion channel. Important for reducing fluoride concentration in the cell, thus reducing its toxicity. In Pasteurella multocida (strain Pm70), this protein is Fluoride-specific ion channel FluC.